We begin with the raw amino-acid sequence, 170 residues long: MKCLLYLCLWCYCVLVSSSIVLICNGGHEYYECGGACDNVCADLHIQNKTNCPIINIRCNDKCYCEDGYARDVNGKCIPIKDCPKIRSRRSIGIPVDKKCCTGPNEHYDEEKVSCPPETCISLVAKFSCIDSPPPSPGCSCNSGYLRLNLTSPCIPICDCPQMQHSPDCQ.

A signal peptide spans 1-19; that stretch reads MKCLLYLCLWCYCVLVSSS. N-linked (GlcNAc...) asparagine glycans are attached at residues Asn48 and Asn149.

In terms of processing, cleaved. Five disulfide bonds are present. When artificially cleaved by thermolysin between Asn-56 and Ile-57, the two obtained chains (called heavy and light chains) remain linked. Post-translationally, the N-terminus is blocked.

Inhibits thermolysin, bacillolysin and pseudolysin, B.polymyxa metalloprotease and human MMP1 and MMP3. No activity on trypsin or cysteine protease papain. This Galleria mellonella (Greater wax moth) protein is Inducible metalloproteinase inhibitor protein (IMPI).